The following is a 423-amino-acid chain: 26S proteasome regulatory subunit 6A homolog B (423 aa).

Serine 18 is subject to Phosphoserine. Residue glycine 211–threonine 218 coordinates ATP. Glycyl lysine isopeptide (Lys-Gly) (interchain with G-Cter in ubiquitin) cross-links involve residues lysine 234, lysine 278, and lysine 415.

It belongs to the AAA ATPase family. As to quaternary structure, component of the 19S regulatory particle (RP/PA700) base subcomplex of the 26S proteasome. The 26S proteasome is composed of a core protease (CP), known as the 20S proteasome, capped at one or both ends by the 19S regulatory particle (RP/PA700). The RP/PA700 complex is composed of at least 17 different subunits in two subcomplexes, the base and the lid, which form the portions proximal and distal to the 20S proteolytic core, respectively.

It is found in the cytoplasm. It localises to the nucleus. In terms of biological role, the 26S proteasome is involved in the ATP-dependent degradation of ubiquitinated proteins. The regulatory (or ATPase) complex confers ATP dependency and substrate specificity to the 26S complex. The sequence is that of 26S proteasome regulatory subunit 6A homolog B (RPT5B) from Arabidopsis thaliana (Mouse-ear cress).